We begin with the raw amino-acid sequence, 407 residues long: MAKEKFERSKPHVNVGTIGHVDHGKTTLTAALTRVCSEVWGGAAVAFDGIDNAPEEKERGITIATSHVEYDSPTRHYAHVDCPGHADYVKNMITGAAQMDGAILVCGATDGPMPQTREHILLSRQVGVPYIVVFLNKADLLAEDCGGVGTDEYNEMLELVEMELRELLDTYEFPGDDTPIIPGSALMALNGEDDNELGTSAVRKLVETLDEYIPEPERAIDQPFLMPIEDVFSISGRGTVVTGRVERGIVKVGEEIEIVGINATTKTTCTGVEMFRKLLDEGRAGENVGVLLRGTKRDEVERGQVLAKPGTITPHTVFQSEVYVLSKDEGGRHTPFFKGYRPQFYFRTTDVTGACELPEGVEMVMPGDNIQMTVTLIAPIAMEEGLRFAIREGGRTVGAGVVAKIIE.

The tr-type G domain occupies 10 to 217 (KPHVNVGTIG…TLDEYIPEPE (208 aa)). The tract at residues 19–26 (GHVDHGKT) is G1. GTP is bound at residue 19–26 (GHVDHGKT). Position 26 (Thr26) interacts with Mg(2+). The G2 stretch occupies residues 60–64 (GITIA). Residues 81–84 (DCPG) form a G3 region. Residues 81–85 (DCPGH) and 136–139 (NKAD) contribute to the GTP site. Positions 136–139 (NKAD) are G4. A G5 region spans residues 184-186 (SAL).

Belongs to the TRAFAC class translation factor GTPase superfamily. Classic translation factor GTPase family. EF-Tu/EF-1A subfamily. In terms of assembly, monomer.

The protein localises to the cytoplasm. The enzyme catalyses GTP + H2O = GDP + phosphate + H(+). Its function is as follows. GTP hydrolase that promotes the GTP-dependent binding of aminoacyl-tRNA to the A-site of ribosomes during protein biosynthesis. In Teredinibacter turnerae (strain ATCC 39867 / T7901), this protein is Elongation factor Tu.